We begin with the raw amino-acid sequence, 809 residues long: TLR4 interactor with leucine rich repeats (809 aa).

The N-terminal stretch at Met-1–Ser-25 is a signal peptide. The 32-residue stretch at Val-26–Ser-57 folds into the LRRNT domain. Topologically, residues Val-26 to Gln-694 are extracellular. 12 LRR repeats span residues Val-61 to Arg-81, Gln-84 to Lys-105, Arg-108 to Pro-129, Lys-132 to Gly-153, Ser-156 to Pro-177, Asn-180 to Gln-201, Lys-204 to Ala-223, Ser-230 to His-251, Arg-254 to Gly-275, Ala-278 to Glu-298, Ser-302 to His-323, and Arg-326 to Ala-347. Residue Asn-73 is glycosylated (N-linked (GlcNAc...) asparagine). The 58-residue stretch at Asn-359–Asp-416 folds into the LRRCT domain. N-linked (GlcNAc...) asparagine glycosylation occurs at Asn-411. Disordered regions lie at residues Gly-412–Leu-462 and Arg-483–Gln-563. Positions Pro-421–Glu-436 are enriched in polar residues. Positions Gly-488–Ser-506 are enriched in low complexity. Positions Ala-521–Asp-543 are enriched in polar residues. Residues Ala-554 to Gln-563 show a composition bias toward low complexity. An N-linked (GlcNAc...) asparagine glycan is attached at Asn-587. The helical transmembrane segment at Leu-695–Trp-715 threads the bilayer. At Gly-716–Asp-809 the chain is on the cytoplasmic side. A Phosphoserine modification is found at Ser-796.

Belongs to the lipopolysaccharide (LPS) receptor, a multi-protein complex containing at least CD14, MD-2 and TLR4. Interacts with TLR4; this interaction is greatly enhanced by LPS stimulation. Interacts with LPS. In terms of processing, N-glycolysaled. As to expression, highly expressed in brain, spinal cord and lung.

It is found in the membrane. Functionally, component of the TLR4 signaling complex. Mediates the innate immune response to bacterial lipopolysaccharide (LPS) leading to cytokine secretion. The polypeptide is TLR4 interactor with leucine rich repeats (Tril) (Mus musculus (Mouse)).